The sequence spans 233 residues: Large ribosomal subunit protein uL1 (233 aa).

This sequence belongs to the universal ribosomal protein uL1 family. As to quaternary structure, part of the 50S ribosomal subunit.

Binds directly to 23S rRNA. The L1 stalk is quite mobile in the ribosome, and is involved in E site tRNA release. Functionally, protein L1 is also a translational repressor protein, it controls the translation of the L11 operon by binding to its mRNA. In Zymomonas mobilis subsp. mobilis (strain ATCC 31821 / ZM4 / CP4), this protein is Large ribosomal subunit protein uL1.